We begin with the raw amino-acid sequence, 247 residues long: ATP synthase subunit a, chloroplastic (247 aa).

The next 5 helical transmembrane spans lie at 38–58 (QVLI…TIAV), 95–115 (VPFI…GALL), 134–154 (INTT…AGLT), 199–219 (LVVV…VMFL), and 220–240 (GLFT…AYIG).

The protein belongs to the ATPase A chain family. In terms of assembly, F-type ATPases have 2 components, CF(1) - the catalytic core - and CF(0) - the membrane proton channel. CF(1) has five subunits: alpha(3), beta(3), gamma(1), delta(1), epsilon(1). CF(0) has four main subunits: a, b, b' and c.

Its subcellular location is the plastid. It localises to the chloroplast thylakoid membrane. Functionally, key component of the proton channel; it plays a direct role in the translocation of protons across the membrane. This is ATP synthase subunit a, chloroplastic from Panax ginseng (Korean ginseng).